The chain runs to 227 residues: ATP-dependent dethiobiotin synthetase BioD (227 aa).

13-18 (EVGKSV) contacts ATP. Residue Ser17 participates in Mg(2+) binding. Lys38 is a catalytic residue. Ser42 contributes to the substrate binding site. ATP is bound by residues Asp55, 116–119 (EGAG), and 176–177 (ND). The Mg(2+) site is built by Asp55 and Glu116.

Belongs to the dethiobiotin synthetase family. As to quaternary structure, homodimer. Mg(2+) is required as a cofactor.

It is found in the cytoplasm. It catalyses the reaction (7R,8S)-7,8-diammoniononanoate + CO2 + ATP = (4R,5S)-dethiobiotin + ADP + phosphate + 3 H(+). It participates in cofactor biosynthesis; biotin biosynthesis; biotin from 7,8-diaminononanoate: step 1/2. In terms of biological role, catalyzes a mechanistically unusual reaction, the ATP-dependent insertion of CO2 between the N7 and N8 nitrogen atoms of 7,8-diaminopelargonic acid (DAPA, also called 7,8-diammoniononanoate) to form a ureido ring. The polypeptide is ATP-dependent dethiobiotin synthetase BioD (Serratia marcescens).